A 431-amino-acid chain; its full sequence is PHD finger-containing protein 1 (431 aa).

The PHD-type zinc-finger motif lies at 7–59 (GPVCQTCGDIGFEEALVFCDSCMFESIHRYCLGITPIPFTEYITWICEDCDNS). Positions 10, 13, 25, 28, 34, 37, 53, and 56 each coordinate Zn(2+). Residues 125–221 (EAADSSSVPD…QESSDSRKPH (97 aa)) form a disordered region. A compositionally biased stretch (polar residues) spans 128 to 139 (DSSSVPDHSSCT). The segment covering 160–171 (KKKKKKKKKKSI) has biased composition (basic residues). The span at 191–202 (VVEPVEVSSSSP) shows a compositional bias: low complexity. A compositionally biased stretch (basic and acidic residues) spans 205–221 (ETMESKRQESSDSRKPH).

As to quaternary structure, interacts directly with AIPP3/BDT1.

In terms of biological role, together with AIPP3/BDT1, cooperates to form a BAH-PHD bivalent histone reader complex able to read histone H3 lysine 27 trimethylation (H3K27me3) histone marks in order to regulate transcription, especially to prevent early flowering; promotes AIPP3/BDT1 binding to H3K27me3. The polypeptide is PHD finger-containing protein 1 (Arabidopsis thaliana (Mouse-ear cress)).